The chain runs to 517 residues: Ribose import ATP-binding protein RbsA 1 (517 aa).

ABC transporter domains lie at 11–251 and 263–507; these read LEMR…VGRD and YDPG…ALAT. An ATP-binding site is contributed by 43-50; that stretch reads GENGAGKS.

This sequence belongs to the ABC transporter superfamily. Ribose importer (TC 3.A.1.2.1) family. The complex is composed of an ATP-binding protein (RbsA), two transmembrane proteins (RbsC) and a solute-binding protein (RbsB).

It is found in the cell inner membrane. It catalyses the reaction D-ribose(out) + ATP + H2O = D-ribose(in) + ADP + phosphate + H(+). In terms of biological role, part of the ABC transporter complex RbsABC involved in ribose import. Responsible for energy coupling to the transport system. This chain is Ribose import ATP-binding protein RbsA 1, found in Burkholderia cenocepacia (strain HI2424).